Consider the following 95-residue polypeptide: Protein TusB (95 aa).

This sequence belongs to the DsrH/TusB family. As to quaternary structure, heterohexamer, formed by a dimer of trimers. The hexameric TusBCD complex contains 2 copies each of TusB, TusC and TusD. The TusBCD complex interacts with TusE.

It localises to the cytoplasm. In terms of biological role, part of a sulfur-relay system required for 2-thiolation of 5-methylaminomethyl-2-thiouridine (mnm(5)s(2)U) at tRNA wobble positions. The protein is Protein TusB of Buchnera aphidicola subsp. Schizaphis graminum (strain Sg).